We begin with the raw amino-acid sequence, 394 residues long: V-type proton ATPase subunit C (394 aa).

A Phosphoserine modification is found at Ser-17.

The protein belongs to the V-ATPase C subunit family. V-ATPase is a heteromultimeric enzyme composed of a peripheral catalytic V1 complex (components A to H) attached to an integral membrane V0 proton pore complex (components: a, c, c', c'', d, e, f and VOA1).

The protein localises to the cytoplasm. The protein resides in the vacuole membrane. In terms of biological role, subunit of the V1 complex of vacuolar(H+)-ATPase (V-ATPase), a multisubunit enzyme composed of a peripheral complex (V1) that hydrolyzes ATP and a membrane integral complex (V0) that translocates protons. V-ATPase is responsible for acidifying and maintaining the pH of intracellular compartments. Subunit C is necessary for the assembly of the catalytic sector of the enzyme and is likely to have a specific function in its catalytic activity. Reversibly leaves the enzyme after glucose depletion, causing the catalytic subcomplex V1 to detach from the V0 section. This chain is V-type proton ATPase subunit C, found in Schizosaccharomyces pombe (strain 972 / ATCC 24843) (Fission yeast).